Here is a 215-residue protein sequence, read N- to C-terminus: Cytidylate kinase (215 aa).

Position 10-18 (10-18) interacts with ATP; the sequence is GPAASGKGT.

The protein belongs to the cytidylate kinase family. Type 1 subfamily.

It localises to the cytoplasm. The enzyme catalyses CMP + ATP = CDP + ADP. It catalyses the reaction dCMP + ATP = dCDP + ADP. In Bartonella bacilliformis (strain ATCC 35685 / KC583 / Herrer 020/F12,63), this protein is Cytidylate kinase.